We begin with the raw amino-acid sequence, 428 residues long: Enolase (428 aa).

A (2R)-2-phosphoglycerate-binding site is contributed by glutamine 163. The active-site Proton donor is the glutamate 205. Residues aspartate 242, glutamate 285, and aspartate 312 each contribute to the Mg(2+) site. Lysine 337, arginine 366, serine 367, and lysine 388 together coordinate (2R)-2-phosphoglycerate. Lysine 337 serves as the catalytic Proton acceptor.

Belongs to the enolase family. Mg(2+) is required as a cofactor.

It localises to the cytoplasm. Its subcellular location is the secreted. The protein localises to the cell surface. It catalyses the reaction (2R)-2-phosphoglycerate = phosphoenolpyruvate + H2O. It participates in carbohydrate degradation; glycolysis; pyruvate from D-glyceraldehyde 3-phosphate: step 4/5. Catalyzes the reversible conversion of 2-phosphoglycerate (2-PG) into phosphoenolpyruvate (PEP). It is essential for the degradation of carbohydrates via glycolysis. The protein is Enolase of Nitrosomonas europaea (strain ATCC 19718 / CIP 103999 / KCTC 2705 / NBRC 14298).